Reading from the N-terminus, the 396-residue chain is Deoxyuridine 5'-triphosphate nucleotidohydrolase (396 aa).

Substrate-binding positions include 280-282 (RSS) and 380-381 (FG).

This sequence belongs to the dUTPase family. Requires Mg(2+) as cofactor.

It carries out the reaction dUTP + H2O = dUMP + diphosphate + H(+). In terms of biological role, involved in nucleotide metabolism: produces dUMP, the immediate precursor of thymidine nucleotides and decreases the intracellular concentration of dUTP to avoid uracil incorporation into viral DNA. The polypeptide is Deoxyuridine 5'-triphosphate nucleotidohydrolase (Homo sapiens (Human)).